The sequence spans 424 residues: Probable ribonuclease FAU-1 (424 aa).

This sequence belongs to the FAU-1 family.

Its function is as follows. Probable RNase involved in rRNA stability through maturation and/or degradation of precursor rRNAs. Binds to RNA in loop regions with AU-rich sequences. The sequence is that of Probable ribonuclease FAU-1 from Saccharolobus islandicus (strain Y.G.57.14 / Yellowstone #1) (Sulfolobus islandicus).